Reading from the N-terminus, the 435-residue chain is Enolase (435 aa).

A (2R)-2-phosphoglycerate-binding site is contributed by Gln163. Catalysis depends on Glu205, which acts as the Proton donor. The Mg(2+) site is built by Asp243, Glu292, and Asp319. (2R)-2-phosphoglycerate-binding residues include Lys344, Arg373, Ser374, and Lys395. The active-site Proton acceptor is the Lys344.

Belongs to the enolase family. In terms of assembly, homooctamer, a tetramer of homodimers. Requires Mg(2+) as cofactor.

It localises to the cytoplasm. It is found in the secreted. The protein localises to the cell surface. Its subcellular location is the cell wall. It carries out the reaction (2R)-2-phosphoglycerate = phosphoenolpyruvate + H2O. It participates in carbohydrate degradation; glycolysis; pyruvate from D-glyceraldehyde 3-phosphate: step 4/5. Functionally, catalyzes the reversible conversion of 2-phosphoglycerate (2-PG) into phosphoenolpyruvate (PEP). It is essential for the degradation of carbohydrates via glycolysis. In terms of biological role, 'Moonlights' as a plasminogen receptor. Binds plasminogen and more weakly plasmin when expressed on the bacterial cell surface; probably has more than one plasmin(ogen) binding site, may bind via Lys residues. Plasminogen binding potentially allows the bacterium to acquire surface-associated proteolytic activity, which in turn contributes to tissue invasion and virulence. The sequence is that of Enolase from Streptococcus pyogenes serotype M6 (strain ATCC BAA-946 / MGAS10394).